Consider the following 509-residue polypeptide: DEAD-box ATP-dependent RNA helicase CshA (509 aa).

The short motif at 2-30 (QNFKELGISDKTVQTLEAMGFKEPTPIQK) is the Q motif element. Residues 33–203 (IPYALEGDDI…QQFMKAPKII (171 aa)) form the Helicase ATP-binding domain. 46–53 (AQTGTGKT) contacts ATP. The DEAD box motif lies at 150 to 153 (DEAD). One can recognise a Helicase C-terminal domain in the interval 214-375 (QIDEYYTIVK…LRPPHRKEVL (162 aa)). Composition is skewed to basic residues over residues 440–459 (ARKNRSSKGGSRRSNHKRGN) and 467–482 (RRSKGSKGQSSKKKNQ). The interval 440-509 (ARKNRSSKGG…KGRTFADHQK (70 aa)) is disordered. The span at 483 to 492 (KKFDRRDKQQ) shows a compositional bias: basic and acidic residues.

This sequence belongs to the DEAD box helicase family. CshA subfamily. In terms of assembly, oligomerizes, may be a member of the RNA degradosome.

It localises to the cytoplasm. The catalysed reaction is ATP + H2O = ADP + phosphate + H(+). Its function is as follows. DEAD-box RNA helicase possibly involved in RNA degradation. Unwinds dsRNA in both 5'- and 3'-directions, has RNA-dependent ATPase activity. The polypeptide is DEAD-box ATP-dependent RNA helicase CshA (Staphylococcus epidermidis (strain ATCC 12228 / FDA PCI 1200)).